A 106-amino-acid chain; its full sequence is SDO1-like protein C21C3.19 (106 aa).

The protein belongs to the SDO1-like family.

It localises to the cytoplasm. The protein localises to the nucleus. In terms of biological role, may play a role in RNA metabolism. This Schizosaccharomyces pombe (strain 972 / ATCC 24843) (Fission yeast) protein is SDO1-like protein C21C3.19.